The primary structure comprises 614 residues: DNA mismatch repair protein MutL (614 aa).

This sequence belongs to the DNA mismatch repair MutL/HexB family.

In terms of biological role, this protein is involved in the repair of mismatches in DNA. It is required for dam-dependent methyl-directed DNA mismatch repair. May act as a 'molecular matchmaker', a protein that promotes the formation of a stable complex between two or more DNA-binding proteins in an ATP-dependent manner without itself being part of a final effector complex. This chain is DNA mismatch repair protein MutL, found in Chlorobium phaeovibrioides (strain DSM 265 / 1930) (Prosthecochloris vibrioformis (strain DSM 265)).